Reading from the N-terminus, the 764-residue chain is 5-methyltetrahydropteroyltriglutamate--homocysteine methyltransferase (764 aa).

5-methyltetrahydropteroyltri-L-glutamate is bound by residues 17 to 20 and Lys-117; that span reads RELK. Residues 437 to 439 and Glu-490 each bind L-homocysteine; that span reads IGS. L-methionine is bound by residues 437–439 and Glu-490; that span reads IGS. Residues 521-522 and Trp-567 contribute to the 5-methyltetrahydropteroyltri-L-glutamate site; that span reads RC. Asp-605 is a binding site for L-homocysteine. Asp-605 contacts L-methionine. A 5-methyltetrahydropteroyltri-L-glutamate-binding site is contributed by Glu-611. Zn(2+) contacts are provided by His-647, Cys-649, and Glu-671. The active-site Proton donor is His-701. Cys-733 is a Zn(2+) binding site.

It belongs to the vitamin-B12 independent methionine synthase family. The cofactor is Zn(2+).

The enzyme catalyses 5-methyltetrahydropteroyltri-L-glutamate + L-homocysteine = tetrahydropteroyltri-L-glutamate + L-methionine. It functions in the pathway amino-acid biosynthesis; L-methionine biosynthesis via de novo pathway; L-methionine from L-homocysteine (MetE route): step 1/1. Catalyzes the transfer of a methyl group from 5-methyltetrahydrofolate to homocysteine resulting in methionine formation. In Blochmanniella pennsylvanica (strain BPEN), this protein is 5-methyltetrahydropteroyltriglutamate--homocysteine methyltransferase.